Here is a 274-residue protein sequence, read N- to C-terminus: Penicillin-insensitive murein endopeptidase (274 aa).

The signal sequence occupies residues 1-19; that stretch reads MNKTAIALLALLASSASLA. Disulfide bonds link Cys-44–Cys-265, Cys-187–Cys-235, and Cys-216–Cys-223. Zn(2+) is bound by residues His-110, His-113, Asp-120, Asp-147, His-150, and His-211. The segment at 227-274 is disordered; it reads PLPPPGDGCGAELQSWFEPPKPGTTKPEKKTPPPLPPSCQALLDEHVI.

It belongs to the peptidase M74 family. In terms of assembly, dimer. The cofactor is Zn(2+).

Its subcellular location is the periplasm. In terms of biological role, murein endopeptidase that cleaves the D-alanyl-meso-2,6-diamino-pimelyl amide bond that connects peptidoglycan strands. Likely plays a role in the removal of murein from the sacculus. This is Penicillin-insensitive murein endopeptidase from Escherichia coli O1:K1 / APEC.